The chain runs to 340 residues: Beta-hexosaminidase (340 aa).

Substrate contacts are provided by residues Asp-60, Arg-68, Arg-127, and 157 to 158 (KH). His-170 serves as the catalytic Proton donor/acceptor. Asp-242 functions as the Nucleophile in the catalytic mechanism.

Belongs to the glycosyl hydrolase 3 family. NagZ subfamily.

The protein localises to the cytoplasm. It catalyses the reaction Hydrolysis of terminal non-reducing N-acetyl-D-hexosamine residues in N-acetyl-beta-D-hexosaminides.. The protein operates within cell wall biogenesis; peptidoglycan recycling. In terms of biological role, plays a role in peptidoglycan recycling by cleaving the terminal beta-1,4-linked N-acetylglucosamine (GlcNAc) from peptide-linked peptidoglycan fragments, giving rise to free GlcNAc, anhydro-N-acetylmuramic acid and anhydro-N-acetylmuramic acid-linked peptides. The chain is Beta-hexosaminidase from Glaesserella parasuis serovar 5 (strain SH0165) (Haemophilus parasuis).